A 321-amino-acid chain; its full sequence is Digestive cysteine proteinase 3 (321 aa).

A signal peptide spans 1 to 16 (MKVAALFLCGLALATA). Residues 17–106 (SPSWDHFKTQ…AVFTAEAGPM (90 aa)) constitute a propeptide, activation peptide. Intrachain disulfides connect cysteine 127/cysteine 170, cysteine 161/cysteine 203, and cysteine 261/cysteine 310. Cysteine 130 is an active-site residue. Active-site residues include histidine 268 and asparagine 288.

It belongs to the peptidase C1 family.

Its activity is regulated as follows. Inhibited by E-64, antipain, leupeptin, heavy metal ions, iodoacetic acid, dithionitrobenzene, p-hydroxymercuri-benzoate; activated by mercaptoethanol and dithiothreitol. The polypeptide is Digestive cysteine proteinase 3 (LCP3) (Homarus americanus (American lobster)).